Consider the following 155-residue polypeptide: Small ribosomal subunit protein uS7 (155 aa).

Belongs to the universal ribosomal protein uS7 family. As to quaternary structure, part of the 30S ribosomal subunit. Contacts proteins S9 and S11.

Its function is as follows. One of the primary rRNA binding proteins, it binds directly to 16S rRNA where it nucleates assembly of the head domain of the 30S subunit. Is located at the subunit interface close to the decoding center, probably blocks exit of the E-site tRNA. This is Small ribosomal subunit protein uS7 from Mycoplasmoides gallisepticum (strain R(low / passage 15 / clone 2)) (Mycoplasma gallisepticum).